A 268-amino-acid chain; its full sequence is Tryptophan synthase alpha chain (268 aa).

Active-site proton acceptor residues include Glu-49 and Asp-60.

Belongs to the TrpA family. In terms of assembly, tetramer of two alpha and two beta chains.

The catalysed reaction is (1S,2R)-1-C-(indol-3-yl)glycerol 3-phosphate + L-serine = D-glyceraldehyde 3-phosphate + L-tryptophan + H2O. It participates in amino-acid biosynthesis; L-tryptophan biosynthesis; L-tryptophan from chorismate: step 5/5. Functionally, the alpha subunit is responsible for the aldol cleavage of indoleglycerol phosphate to indole and glyceraldehyde 3-phosphate. This Xanthomonas euvesicatoria pv. vesicatoria (strain 85-10) (Xanthomonas campestris pv. vesicatoria) protein is Tryptophan synthase alpha chain.